We begin with the raw amino-acid sequence, 314 residues long: MEDFHHVTVLLKEAVAGLAIKPTGVYVDCTLGGGGHSQRILEQLTTGHLYAFDQDQTAITYNEEHLKTYLDAGKLTFIKSNFRQIQTELTERGITQVDGILYDLGVSSPQFDEADRGFSYQHDAPLDMRMDQSQKLSAWIVVNEWSFNDLLRIFHRYGEEKFAKPIARAIERHREQAPIDTTGQLVEIIKEGIPAAARRHGGHPAKKVFQAIRIAVNDELGALEDSLEQAVSLLDVNGRISVITFQSLEDRLVKTMFREQSSLPELPHGIPVIPDNLQPDFKLVNHKPILPSEEELAVNHRAHSAKLRILEKIK.

Residues 34–36, aspartate 53, phenylalanine 82, aspartate 103, and glutamine 110 contribute to the S-adenosyl-L-methionine site; that span reads GGH.

This sequence belongs to the methyltransferase superfamily. RsmH family.

It localises to the cytoplasm. It carries out the reaction cytidine(1402) in 16S rRNA + S-adenosyl-L-methionine = N(4)-methylcytidine(1402) in 16S rRNA + S-adenosyl-L-homocysteine + H(+). In terms of biological role, specifically methylates the N4 position of cytidine in position 1402 (C1402) of 16S rRNA. This Levilactobacillus brevis (strain ATCC 367 / BCRC 12310 / CIP 105137 / JCM 1170 / LMG 11437 / NCIMB 947 / NCTC 947) (Lactobacillus brevis) protein is Ribosomal RNA small subunit methyltransferase H.